A 51-amino-acid chain; its full sequence is Large ribosomal subunit protein eL39 (51 aa).

This sequence belongs to the eukaryotic ribosomal protein eL39 family. Interacts with impact.

The polypeptide is Large ribosomal subunit protein eL39 (rpl39) (Ictalurus punctatus (Channel catfish)).